Here is a 2144-residue protein sequence, read N- to C-terminus: Insulin-like receptor (2144 aa).

The N-terminal stretch at 1–43 (MFNMPRGVTKSKSKRGKIKMENDMAAAATTTACTLGHICVLCR) is a signal peptide. N-linked (GlcNAc...) asparagine glycosylation occurs at Asn74. Residues 174-199 (RRQHQQQHHHHYQHHHQQHHQQHHQR) show a composition bias toward basic residues. Positions 174–200 (RRQHQQQHHHHYQHHHQQHHQQHHQRQ) are disordered. The N-linked (GlcNAc...) asparagine glycan is linked to Asn203. Residues 229–256 (NYKQQQQLQHNQQLPRATPQQKQQEKDR) form a disordered region. The segment covering 232 to 242 (QQQQLQHNQQL) has biased composition (low complexity). N-linked (GlcNAc...) asparagine glycans are attached at residues Asn265, Asn356, Asn376, Asn406, Asn468, and Asn509. 8 cysteine pairs are disulfide-bonded: Cys531/Cys539, Cys535/Cys545, Cys546/Cys554, Cys550/Cys564, Cys567/Cys576, Cys580/Cys591, Cys597/Cys618, and Cys635/Cys638. Residues 542 to 586 (EHTCCSQDCLGGCVIDKNGNESCISCRNVSFNNICMDSCPKGYYQ) form an FU repeat. 2 N-linked (GlcNAc...) asparagine glycosylation sites follow: Asn561 and Asn569. N-linked (GlcNAc...) asparagine glycosylation is found at Asn751, Asn810, Asn824, Asn839, Asn864, Asn898, Asn946, Asn1053, Asn1147, Asn1218, and Asn1265. 2 Fibronectin type-III domains span residues 825 to 927 (VTTK…TNPG) and 928 to 1026 (RPSK…EYDD). A disordered region spans residues 1053 to 1084 (NGSSDKSDGAEGAALDSNAIPNGGATNPSRRR). A Fibronectin type-III 3 domain is found at 1210 to 1305 (LKVDLEHANN…EVEHIKVEPP (96 aa)). The chain crosses the membrane as a helical span at residues 1311-1331 (VFFWLLGIGLAFLIVSLFGYV). Topologically, residues 1332-2144 (CYLHKRKVPS…PPNGFIGREA (813 aa)) are cytoplasmic. The tract at residues 1351-1354 (NPFY) is chico-binding. At Tyr1354 the chain carries Phosphotyrosine; by autocatalysis. The Protein kinase domain maps to 1371-1659 (IIQLAPLGQG…LEPQCPNSQF (289 aa)). Residues 1377-1385 (LGQGSFGMV) and Lys1405 each bind ATP. The Proton acceptor role is filled by Asp1519. Residues Tyr1545, Tyr1549, and Tyr1550 each carry the phosphotyrosine; by autocatalysis modification. Disordered stretches follow at residues 1690–1724 (VPLD…DQPP), 1788–1871 (RGYE…KKTV), 1886–1962 (LFNH…ISDN), and 2020–2144 (ISHN…GREA). At Ser1816 the chain carries Phosphoserine. Composition is skewed to low complexity over residues 1849 to 1860 (STASAGSSNASS) and 1894 to 1916 (SNAS…NLTS). Residues 2042–2062 (SDEDNEQEEDDEDEDDDVDDE) show a composition bias toward acidic residues. Residues 2063-2073 (HVEHIKMERMP) show a composition bias toward basic and acidic residues. Polar residues predominate over residues 2084 to 2120 (SKTQPPRSRSVSQTRKSPTNPNSGIGATGAGNRSNLL).

This sequence belongs to the protein kinase superfamily. Tyr protein kinase family. Insulin receptor subfamily. In terms of assembly, tetramer of 2 alpha and 2 beta chains linked by disulfide bonds. The alpha chains contribute to the formation of the ligand-binding domain, while the beta chains carry the kinase domain. Interacts (via C-terminal cytoplasmic region) with dock/dreadlocks (via SH2 and SH3 domains); when autophosphorylated. May interact (via beta subunit) with chico/IRS-1; this interaction may lead to tyrosine phosphorylation of the insulin receptor substrate chico. Interacts with Elp6; the interaction may stabilize Elp6. It depends on Mn(2+) as a cofactor. The 280 kDa proreceptor is proteolytically processed to form a 120 kDa alpha subunit and a 170 kDa beta subunit. The beta subunit undergoes cell-specific cleavage to generate a 90 kDa beta subunit and a free 60 kDa C-terminal subunit. Both the 90 kDa and the 170 kDa beta subunits can assemble with the alpha subunits to form mature receptors. Post-translationally, autophosphorylated on tyrosine residues, including Tyr-1549 and Tyr-1550, in response to exogenous insulin. Tyr-1549 and Tyr-1550 are dephosphorylated by Ptp61F recruited by the dock/dreadlocks adapter protein. In terms of processing, phosphorylation of Tyr-1354 is required for Chico-binding.

The protein localises to the membrane. Its subcellular location is the cell projection. The protein resides in the axon. It localises to the growth cone membrane. The catalysed reaction is L-tyrosyl-[protein] + ATP = O-phospho-L-tyrosyl-[protein] + ADP + H(+). Activated in response to insulin. Autophosphorylation activates the kinase activity. Has a ligand-stimulated tyrosine-protein kinase activity. Binds 3 insulin-like peptide ligands. Regulates cell number and cell size during development by regulating cell growth and survival, affecting body size and organ size, including ovaries and imaginal disks. Plays a role in life-span determination. May be involved in regulation of other neuroendocrine signaling pathways. Involved in the development of the embryonic nervous system. Functions upstream of dock/dreadlocks for photoreceptor (R cell) axon guidance and targeting in the visual system. Involved in the acs mediated recovery of gut enterocytes following the cytoplasmic purge response to intestinal bacterial infection. In Drosophila melanogaster (Fruit fly), this protein is Insulin-like receptor.